Reading from the N-terminus, the 528-residue chain is Biotin carboxylase 1, chloroplastic (528 aa).

The N-terminal 51 residues, 1–51 (MEATLPVCKSVTSTPGLFMGKTSGIRSSQCSFMMGNKVNFPRQRAQTAHVH), are a transit peptide targeting the chloroplast. Residues lysine 179, lysine 221, 227-228 (GG), 263-266 (EKYV), and histidine 271 each bind ATP. Positions 183-380 (RETMKKAGVP…LIEEQIRVAM (198 aa)) constitute an ATP-grasp domain. Lysine 300 contacts hydrogencarbonate. The ATP site is built by glutamate 338 and glutamate 351. The Mg(2+) site is built by glutamate 338, glutamate 351, and asparagine 353. Glutamate 338, glutamate 351, and asparagine 353 together coordinate Mn(2+). 3 residues coordinate hydrogencarbonate: arginine 355, valine 358, and arginine 401. The active site involves arginine 355. Arginine 401 provides a ligand contact to biotin.

As to quaternary structure, acetyl-CoA carboxylase is a heterohexamer composed of biotin carboxyl carrier protein, biotin carboxylase and two subunits each of ACCase subunit alpha and ACCase plastid-coded subunit beta (accD). Mg(2+) is required as a cofactor. It depends on Mn(2+) as a cofactor.

It is found in the plastid. The protein resides in the chloroplast. The catalysed reaction is N(6)-biotinyl-L-lysyl-[protein] + hydrogencarbonate + ATP = N(6)-carboxybiotinyl-L-lysyl-[protein] + ADP + phosphate + H(+). The protein operates within lipid metabolism; malonyl-CoA biosynthesis; malonyl-CoA from acetyl-CoA: step 1/1. Its function is as follows. This protein is a component of the acetyl coenzyme A carboxylase complex; first, biotin carboxylase catalyzes the carboxylation of the carrier protein and then the transcarboxylase transfers the carboxyl group to form malonyl-CoA. The chain is Biotin carboxylase 1, chloroplastic from Populus trichocarpa (Western balsam poplar).